The primary structure comprises 248 residues: 3-deoxy-manno-octulosonate cytidylyltransferase (248 aa).

This sequence belongs to the KdsB family.

It localises to the cytoplasm. The catalysed reaction is 3-deoxy-alpha-D-manno-oct-2-ulosonate + CTP = CMP-3-deoxy-beta-D-manno-octulosonate + diphosphate. It participates in nucleotide-sugar biosynthesis; CMP-3-deoxy-D-manno-octulosonate biosynthesis; CMP-3-deoxy-D-manno-octulosonate from 3-deoxy-D-manno-octulosonate and CTP: step 1/1. It functions in the pathway bacterial outer membrane biogenesis; lipopolysaccharide biosynthesis. Its function is as follows. Activates KDO (a required 8-carbon sugar) for incorporation into bacterial lipopolysaccharide in Gram-negative bacteria. In Chlorobium phaeobacteroides (strain BS1), this protein is 3-deoxy-manno-octulosonate cytidylyltransferase.